We begin with the raw amino-acid sequence, 608 residues long: MQFQTEVNQLLQLMIHSLYSNKEIFLRELISNASDALDKLNFLSVSDDKYKSLKFEPKIEIKIDKDKKTLSISDNGIGMDKNDLINNLGTIAKSGTKSFLENLSGDAKKDSQLIGQFGVGFYSAFMVASKIEVLSKKALDDKAYLWSSDANGYEINDASKEEQGTSITLYLKDDEFAHAYKIENIIEKYSNHIQFPIFMEKEEFTPAKEGEEEGKTELKISQINKANALWRMQKSSLKAEDYERFYEQNFHDSNKPLLYLHTKSEGKLEYNSLFFIPQNAPFDLFRVDYQSGLKLYVKRVFISDDDKELLPTYLRFVRGIIDVEDLPLNVSREILQENQILKGVKEASVKKILGELEKLKNNDKEKYLSFFKTFGKVLKEGLYGFGGEKDSLLKLMLYKSTKGENLRSLEEYKNDLQGEQKEIFYIAGNNESLLRTSPLLEEYKQKNIEVLLMDDEIDSLVTPMLEFEGLKFVAINQVEDKNELSDEEKNTFAPLVAKFKELLKDQVEDVRLTSRLKDSPSCIVYDKNKLDFAMQQLLKQMGQEQNFKPILEINPKHAIFTGLKNNETFSADIATLVLNMAKLSEGMGVDNPAEFNASLTKIINKAFS.

Positions 1-332 (MQFQTEVNQL…VEDLPLNVSR (332 aa)) are a; substrate-binding. A b region spans residues 333-536 (EILQENQILK…KNKLDFAMQQ (204 aa)). Residues 537–608 (LLKQMGQEQN…LTKIINKAFS (72 aa)) are c.

Belongs to the heat shock protein 90 family. Homodimer.

The protein localises to the cytoplasm. In terms of biological role, molecular chaperone. Has ATPase activity. This Campylobacter jejuni subsp. doylei (strain ATCC BAA-1458 / RM4099 / 269.97) protein is Chaperone protein HtpG.